The chain runs to 237 residues: Purine nucleoside phosphorylase DeoD-type (237 aa).

Residue H4 coordinates a purine D-ribonucleoside. Phosphate-binding positions include G20, R24, R43, and 87 to 90 (RVGT). Residues 179–181 (EME) and 203–204 (SD) contribute to the a purine D-ribonucleoside site. Residue D204 is the Proton donor of the active site.

The protein belongs to the PNP/UDP phosphorylase family. As to quaternary structure, homohexamer; trimer of homodimers.

It catalyses the reaction a purine D-ribonucleoside + phosphate = a purine nucleobase + alpha-D-ribose 1-phosphate. The catalysed reaction is a purine 2'-deoxy-D-ribonucleoside + phosphate = a purine nucleobase + 2-deoxy-alpha-D-ribose 1-phosphate. In terms of biological role, catalyzes the reversible phosphorolytic breakdown of the N-glycosidic bond in the beta-(deoxy)ribonucleoside molecules, with the formation of the corresponding free purine bases and pentose-1-phosphate. The sequence is that of Purine nucleoside phosphorylase DeoD-type from Streptococcus gordonii (strain Challis / ATCC 35105 / BCRC 15272 / CH1 / DL1 / V288).